Here is a 143-residue protein sequence, read N- to C-terminus: Ribosome-binding factor A (143 aa).

Residues 117 to 143 are disordered; that stretch reads DAEIARRSQGAMPAGEADPYRHSDEEE. Residues 134 to 143 are compositionally biased toward basic and acidic residues; the sequence is DPYRHSDEEE.

The protein belongs to the RbfA family. Monomer. Binds 30S ribosomal subunits, but not 50S ribosomal subunits or 70S ribosomes.

It is found in the cytoplasm. Its function is as follows. One of several proteins that assist in the late maturation steps of the functional core of the 30S ribosomal subunit. Associates with free 30S ribosomal subunits (but not with 30S subunits that are part of 70S ribosomes or polysomes). Required for efficient processing of 16S rRNA. May interact with the 5'-terminal helix region of 16S rRNA. This is Ribosome-binding factor A from Cutibacterium acnes (strain DSM 16379 / KPA171202) (Propionibacterium acnes).